The sequence spans 271 residues: ATP synthase subunit delta (271 aa).

This sequence belongs to the ATPase delta chain family. As to quaternary structure, F-type ATPases have 2 components, F(1) - the catalytic core - and F(0) - the membrane proton channel. F(1) has five subunits: alpha(3), beta(3), gamma(1), delta(1), epsilon(1). F(0) has three main subunits: a(1), b(2) and c(10-14). The alpha and beta chains form an alternating ring which encloses part of the gamma chain. F(1) is attached to F(0) by a central stalk formed by the gamma and epsilon chains, while a peripheral stalk is formed by the delta and b chains.

It localises to the cell membrane. In terms of biological role, f(1)F(0) ATP synthase produces ATP from ADP in the presence of a proton or sodium gradient. F-type ATPases consist of two structural domains, F(1) containing the extramembraneous catalytic core and F(0) containing the membrane proton channel, linked together by a central stalk and a peripheral stalk. During catalysis, ATP synthesis in the catalytic domain of F(1) is coupled via a rotary mechanism of the central stalk subunits to proton translocation. Its function is as follows. This protein is part of the stalk that links CF(0) to CF(1). It either transmits conformational changes from CF(0) to CF(1) or is implicated in proton conduction. This chain is ATP synthase subunit delta, found in Corynebacterium kroppenstedtii (strain DSM 44385 / JCM 11950 / CIP 105744 / CCUG 35717).